Consider the following 101-residue polypeptide: Urease subunit beta (101 aa).

This sequence belongs to the urease beta subunit family. In terms of assembly, heterotrimer of UreA (gamma), UreB (beta) and UreC (alpha) subunits. Three heterotrimers associate to form the active enzyme.

The protein resides in the cytoplasm. It carries out the reaction urea + 2 H2O + H(+) = hydrogencarbonate + 2 NH4(+). It participates in nitrogen metabolism; urea degradation; CO(2) and NH(3) from urea (urease route): step 1/1. In Bradyrhizobium sp. (strain BTAi1 / ATCC BAA-1182), this protein is Urease subunit beta.